We begin with the raw amino-acid sequence, 504 residues long: Maturase K (504 aa).

The protein belongs to the intron maturase 2 family. MatK subfamily.

The protein resides in the plastid. The protein localises to the chloroplast. Usually encoded in the trnK tRNA gene intron. Probably assists in splicing its own and other chloroplast group II introns. The polypeptide is Maturase K (Quercus robur (English oak)).